A 406-amino-acid polypeptide reads, in one-letter code: Phosphoglycerate kinase (406 aa).

Substrate-binding positions include 23–25, Arg-38, 61–64, Arg-117, and Arg-157; these read DIN and HQGR. Residues Glu-331 and 357-360 contribute to the ATP site; that span reads GGHI.

Belongs to the phosphoglycerate kinase family. As to quaternary structure, monomer.

It localises to the cytoplasm. It catalyses the reaction (2R)-3-phosphoglycerate + ATP = (2R)-3-phospho-glyceroyl phosphate + ADP. The protein operates within carbohydrate degradation; glycolysis; pyruvate from D-glyceraldehyde 3-phosphate: step 2/5. The protein is Phosphoglycerate kinase of Methanopyrus kandleri (strain AV19 / DSM 6324 / JCM 9639 / NBRC 100938).